The following is a 131-amino-acid chain: Small ribosomal subunit protein uS11 (131 aa).

This sequence belongs to the universal ribosomal protein uS11 family. Part of the 30S ribosomal subunit. Interacts with proteins S7 and S18. Binds to IF-3.

Located on the platform of the 30S subunit, it bridges several disparate RNA helices of the 16S rRNA. Forms part of the Shine-Dalgarno cleft in the 70S ribosome. In Clostridium novyi (strain NT), this protein is Small ribosomal subunit protein uS11.